Reading from the N-terminus, the 248-residue chain is MIRVGVLGAKGRVGTTIVAEVEQNPNLELSAALDHGDDLQELVDAKTDVVVDFTQPDSVMSNVEFCIRNGIHAVIGTTGWTEERYETVRSLLQDSPKVGVLVAPNFAISAVLTMKFAEIAAPFFESAEVIEFHHPNKLDAPSGTAVHTAEGIARARREAGLEEQPDATAQSLDGARGSDVQGVPVHAVRMTGMVAHEEVIFGTRGQSLTIRQDSYDRESFVPGVVIGVEKIADNPGLTIGLEKFLGLD.

Residues 8-13, Asp-34, 76-78, and 103-106 each bind NAD(+); these read GAKGRV, GTT, and APNF. The active-site Proton donor/acceptor is His-133. Residue His-134 coordinates (S)-2,3,4,5-tetrahydrodipicolinate. Lys-137 (proton donor) is an active-site residue. Residue 143 to 144 participates in (S)-2,3,4,5-tetrahydrodipicolinate binding; it reads GT.

Belongs to the DapB family.

Its subcellular location is the cytoplasm. It catalyses the reaction (S)-2,3,4,5-tetrahydrodipicolinate + NAD(+) + H2O = (2S,4S)-4-hydroxy-2,3,4,5-tetrahydrodipicolinate + NADH + H(+). It carries out the reaction (S)-2,3,4,5-tetrahydrodipicolinate + NADP(+) + H2O = (2S,4S)-4-hydroxy-2,3,4,5-tetrahydrodipicolinate + NADPH + H(+). It participates in amino-acid biosynthesis; L-lysine biosynthesis via DAP pathway; (S)-tetrahydrodipicolinate from L-aspartate: step 4/4. Catalyzes the conversion of 4-hydroxy-tetrahydrodipicolinate (HTPA) to tetrahydrodipicolinate. The protein is 4-hydroxy-tetrahydrodipicolinate reductase of Corynebacterium urealyticum (strain ATCC 43042 / DSM 7109).